Reading from the N-terminus, the 397-residue chain is Acetate kinase (397 aa).

Residue N7 coordinates Mg(2+). K14 contributes to the ATP binding site. R90 is a binding site for substrate. D147 (proton donor/acceptor) is an active-site residue. ATP-binding positions include 207-211 (HLGNG), 282-284 (DFR), and 330-334 (GLGEN). Position 383 (E383) interacts with Mg(2+).

The protein belongs to the acetokinase family. In terms of assembly, homodimer. Requires Mg(2+) as cofactor. Mn(2+) serves as cofactor.

It localises to the cytoplasm. The enzyme catalyses acetate + ATP = acetyl phosphate + ADP. Its pathway is metabolic intermediate biosynthesis; acetyl-CoA biosynthesis; acetyl-CoA from acetate: step 1/2. Functionally, catalyzes the formation of acetyl phosphate from acetate and ATP. Can also catalyze the reverse reaction. The chain is Acetate kinase from Clostridium botulinum (strain 657 / Type Ba4).